We begin with the raw amino-acid sequence, 479 residues long: Long-chain alcohol oxidase (479 aa).

Residues 14 to 183 form the FAD-binding PCMH-type domain; the sequence is QILRPSAAYT…LAVRIRCREQ (170 aa). Residue His-49 is modified to Pros-8alpha-FAD histidine. Residues Thr-113, Gly-116, 120–123, and Ile-173 each bind FAD; that span reads TGTH. Residues 241–258 traverse the membrane as a helical segment; sequence LYWLGTMDYGLILQILFL. FAD is bound by residues Arg-369 and His-425.

It belongs to the oxygen-dependent FAD-linked oxidoreductase family. The cofactor is FAD.

The protein resides in the cell membrane. It catalyses the reaction a long-chain primary fatty alcohol + O2 = a long-chain fatty aldehyde + H2O2. The enzyme catalyses dodecan-1-ol + O2 = dodecanal + H2O2. It carries out the reaction tetradecan-1-ol + O2 = tetradecanal + H2O2. The catalysed reaction is octan-1-ol + O2 = octanal + H2O2. It catalyses the reaction decan-1-ol + O2 = decanal + H2O2. Its pathway is lipid metabolism; fatty acid metabolism. Functionally, in vitro catalyzes the oxidation of a range of fatty alcohols having a carbon chain length of six and above, with a reduction of O2 to H2O2. Shows the highest activity with 1-dodecanol. Is likely involved in lipid metabolism. In Uncultured marine euryarchaeote, this protein is Long-chain alcohol oxidase.